The primary structure comprises 633 residues: GRAM domain-containing protein 4 (633 aa).

Disordered stretches follow at residues 1 to 46 (MGIA…VRPR), 72 to 109 (LAES…AGPG), and 182 to 216 (VLKA…RSQG). The segment covering 27-39 (PWDKGLSGREPPR) has biased composition (basic and acidic residues). Serine 75 and serine 79 each carry phosphoserine. Residues 95 to 104 (SPRDSEELRD) are compositionally biased toward basic and acidic residues. The stretch at 134-190 (HLEIALLEKHFLQEELRKLREETNSEMLRQELDRERQRRIELEQKMQEVLKARSEEQ) forms a coiled coil. Low complexity predominate over residues 190-205 (QPAQPQQPPKGQSQAS). 3 helical membrane passes run 295–315 (VYMN…LAIL), 389–409 (TTQK…FFPY), and 411–431 (LVGL…DFIF). The GRAM domain maps to 500–578 (GNFHEIFNLT…MDITDIQKYK (79 aa)).

In terms of assembly, interacts with RTN4 (isoform B).

The protein resides in the mitochondrion membrane. It is found in the endoplasmic reticulum membrane. In terms of biological role, plays a role as a mediator of E2F1-induced apoptosis in the absence of p53/TP53. Inhibits TLR9 response to nucelic acids and regulates TLR9-mediated innate immune response. The polypeptide is GRAM domain-containing protein 4 (Mus musculus (Mouse)).